The following is a 191-amino-acid chain: Transposon Tn1546 resolvase (191 aa).

Residues 2–138 form the Resolvase/invertase-type recombinase catalytic domain; that stretch reads RKIGYIRVSS…EGIELAKKEG (137 aa). The O-(5'-phospho-DNA)-serine intermediate role is filled by Ser10. The segment at residues 168–187 is a DNA-binding region (H-T-H motif); the sequence is VNQICEITNVSRASLYRKLS.

Belongs to the site-specific recombinase resolvase family.

Its function is as follows. Resolvase catalyzes the resolution (a site-specific recombination) of the cointegrated replicon to yield the final transposition products. The chain is Transposon Tn1546 resolvase from Enterococcus faecium (Streptococcus faecium).